The sequence spans 418 residues: Serine hydroxymethyltransferase (418 aa).

Residues Leu121 and 125–127 (GHL) each bind (6S)-5,6,7,8-tetrahydrofolate. Position 230 is an N6-(pyridoxal phosphate)lysine (Lys230). Residues Glu246 and 355–357 (SPF) contribute to the (6S)-5,6,7,8-tetrahydrofolate site.

Belongs to the SHMT family. Homodimer. Requires pyridoxal 5'-phosphate as cofactor.

Its subcellular location is the cytoplasm. It carries out the reaction (6R)-5,10-methylene-5,6,7,8-tetrahydrofolate + glycine + H2O = (6S)-5,6,7,8-tetrahydrofolate + L-serine. It participates in one-carbon metabolism; tetrahydrofolate interconversion. It functions in the pathway amino-acid biosynthesis; glycine biosynthesis; glycine from L-serine: step 1/1. In terms of biological role, catalyzes the reversible interconversion of serine and glycine with tetrahydrofolate (THF) serving as the one-carbon carrier. This reaction serves as the major source of one-carbon groups required for the biosynthesis of purines, thymidylate, methionine, and other important biomolecules. Also exhibits THF-independent aldolase activity toward beta-hydroxyamino acids, producing glycine and aldehydes, via a retro-aldol mechanism. In Streptococcus pneumoniae serotype 2 (strain D39 / NCTC 7466), this protein is Serine hydroxymethyltransferase.